The sequence spans 543 residues: CTP synthase (543 aa).

Residues 1 to 267 (MTKYVFVTGG…ATQVLNLLNL (267 aa)) are amidoligase domain. Ser-13 serves as a coordination point for CTP. Ser-13 is a UTP binding site. ATP contacts are provided by residues 14–19 (SIGKGI) and Asp-71. Mg(2+)-binding residues include Asp-71 and Glu-141. Residues 148–150 (DIE), 188–193 (KTKPTQ), and Lys-224 each bind CTP. Residues 188–193 (KTKPTQ) and Lys-224 contribute to the UTP site. The Glutamine amidotransferase type-1 domain maps to 292–534 (EVAIVGKYVR…LAAAAKNSNR (243 aa)). L-glutamine is bound at residue Gly-354. Cys-381 (nucleophile; for glutamine hydrolysis) is an active-site residue. L-glutamine contacts are provided by residues 382-385 (LGMQ), Glu-405, and Arg-462. Active-site residues include His-507 and Glu-509.

It belongs to the CTP synthase family. In terms of assembly, homotetramer.

The enzyme catalyses UTP + L-glutamine + ATP + H2O = CTP + L-glutamate + ADP + phosphate + 2 H(+). It catalyses the reaction L-glutamine + H2O = L-glutamate + NH4(+). It carries out the reaction UTP + NH4(+) + ATP = CTP + ADP + phosphate + 2 H(+). The protein operates within pyrimidine metabolism; CTP biosynthesis via de novo pathway; CTP from UDP: step 2/2. Its activity is regulated as follows. Allosterically activated by GTP, when glutamine is the substrate; GTP has no effect on the reaction when ammonia is the substrate. The allosteric effector GTP functions by stabilizing the protein conformation that binds the tetrahedral intermediate(s) formed during glutamine hydrolysis. Inhibited by the product CTP, via allosteric rather than competitive inhibition. Catalyzes the ATP-dependent amination of UTP to CTP with either L-glutamine or ammonia as the source of nitrogen. Regulates intracellular CTP levels through interactions with the four ribonucleotide triphosphates. The sequence is that of CTP synthase from Thermosynechococcus vestitus (strain NIES-2133 / IAM M-273 / BP-1).